A 286-amino-acid polypeptide reads, in one-letter code: Protein HEAT-STRESS-ASSOCIATED 32 (286 aa).

It belongs to the phosphosulfolactate synthase family.

Its function is as follows. Transactivator required, together with HSP101, for long-term acquired thermotolerance (LAT) maintenance, probably by regulating heat-inducible genes expression, thus being a cellular component of thermomemory. The chain is Protein HEAT-STRESS-ASSOCIATED 32 from Arabidopsis thaliana (Mouse-ear cress).